Here is a 289-residue protein sequence, read N- to C-terminus: ATP synthase gamma chain (289 aa).

The protein belongs to the ATPase gamma chain family. As to quaternary structure, F-type ATPases have 2 components, CF(1) - the catalytic core - and CF(0) - the membrane proton channel. CF(1) has five subunits: alpha(3), beta(3), gamma(1), delta(1), epsilon(1). CF(0) has three main subunits: a, b and c.

The protein localises to the cell inner membrane. Functionally, produces ATP from ADP in the presence of a proton gradient across the membrane. The gamma chain is believed to be important in regulating ATPase activity and the flow of protons through the CF(0) complex. The polypeptide is ATP synthase gamma chain (Polynucleobacter asymbioticus (strain DSM 18221 / CIP 109841 / QLW-P1DMWA-1) (Polynucleobacter necessarius subsp. asymbioticus)).